The chain runs to 230 residues: Agamous-like MADS-box protein AGL11 (230 aa).

An MADS-box domain is found at 3 to 57 (RGKIEIKRIENSTNRQVTFCKRRNGLLKKAYELSVLCDAEVALIVFSTRGRLYEY). Residues 87-177 (AAYYQQESAK…RTKVAEVERY (91 aa)) form the K-box domain. Residues 211-230 (SGSGNGGSYSDPDKKILHLG) are disordered. Positions 221–230 (DPDKKILHLG) are enriched in basic and acidic residues.

As to quaternary structure, interacts with AGL15 and AGL16.

It is found in the nucleus. Functionally, probable transcription factor. Is required, together with TT16/AGL32 for the maternal control of endothelium formation, which is essential for female gametophyte development and fertilization, and seed formation. This Arabidopsis thaliana (Mouse-ear cress) protein is Agamous-like MADS-box protein AGL11 (AGL11).